Reading from the N-terminus, the 860-residue chain is Alanine--tRNA ligase (860 aa).

The Zn(2+) site is built by His-563, His-567, Cys-665, and His-669.

It belongs to the class-II aminoacyl-tRNA synthetase family. Requires Zn(2+) as cofactor.

Its subcellular location is the cytoplasm. It carries out the reaction tRNA(Ala) + L-alanine + ATP = L-alanyl-tRNA(Ala) + AMP + diphosphate. Its function is as follows. Catalyzes the attachment of alanine to tRNA(Ala) in a two-step reaction: alanine is first activated by ATP to form Ala-AMP and then transferred to the acceptor end of tRNA(Ala). Also edits incorrectly charged Ser-tRNA(Ala) and Gly-tRNA(Ala) via its editing domain. The chain is Alanine--tRNA ligase from Vibrio parahaemolyticus serotype O3:K6 (strain RIMD 2210633).